The chain runs to 198 residues: 7-methyl-GTP pyrophosphatase (198 aa).

Asp-69 acts as the Proton acceptor in catalysis.

Belongs to the Maf family. YceF subfamily. A divalent metal cation is required as a cofactor.

It is found in the cytoplasm. It carries out the reaction N(7)-methyl-GTP + H2O = N(7)-methyl-GMP + diphosphate + H(+). Its function is as follows. Nucleoside triphosphate pyrophosphatase that hydrolyzes 7-methyl-GTP (m(7)GTP). May have a dual role in cell division arrest and in preventing the incorporation of modified nucleotides into cellular nucleic acids. The sequence is that of 7-methyl-GTP pyrophosphatase from Yersinia pseudotuberculosis serotype I (strain IP32953).